The primary structure comprises 785 residues: Putative lipase C4A8.10 (785 aa).

Disordered stretches follow at residues 29 to 99 and 115 to 140; these read HSAT…SSDF and NTNAINIPEQTRGVSHTSSSPSVGTS. Residues 32-41 are compositionally biased toward low complexity; sequence TSSTTVPPTV. The segment covering 47-58 has biased composition (basic and acidic residues); it reads TKKESGSIEDRA. The span at 63 to 86 shows a compositional bias: polar residues; it reads MTISSGENISKQISENNSSTNPKH. 2 stretches are compositionally biased toward low complexity: residues 89–99 and 127–140; these read SESSPLLSSDF and GVSHTSSSPSVGTS. S390 acts as the Charge relay system in catalysis.

The protein belongs to the putative lipase ROG1 family.

In Schizosaccharomyces pombe (strain 972 / ATCC 24843) (Fission yeast), this protein is Putative lipase C4A8.10.